A 286-amino-acid polypeptide reads, in one-letter code: Probable endonuclease 4 (286 aa).

Zn(2+)-binding residues include H67, H107, E144, D178, H181, H215, D228, H230, and E260.

Belongs to the AP endonuclease 2 family. Zn(2+) serves as cofactor.

It carries out the reaction Endonucleolytic cleavage to 5'-phosphooligonucleotide end-products.. In terms of biological role, endonuclease IV plays a role in DNA repair. It cleaves phosphodiester bonds at apurinic or apyrimidinic (AP) sites, generating a 3'-hydroxyl group and a 5'-terminal sugar phosphate. This is Probable endonuclease 4 from Chloroflexus aggregans (strain MD-66 / DSM 9485).